A 142-amino-acid polypeptide reads, in one-letter code: Small ribosomal subunit protein uS11c (142 aa).

The protein belongs to the universal ribosomal protein uS11 family. As to quaternary structure, part of the 30S ribosomal subunit.

It is found in the plastid. It localises to the chloroplast. This chain is Small ribosomal subunit protein uS11c, found in Welwitschia mirabilis (Tree tumbo).